We begin with the raw amino-acid sequence, 121 residues long: Small ribosomal subunit protein uS11 (121 aa).

This sequence belongs to the universal ribosomal protein uS11 family. In terms of assembly, part of the 30S ribosomal subunit. Interacts with proteins S7 and S18. Binds to IF-3.

Located on the platform of the 30S subunit, it bridges several disparate RNA helices of the 16S rRNA. Forms part of the Shine-Dalgarno cleft in the 70S ribosome. This Mycoplasma pneumoniae (strain ATCC 29342 / M129 / Subtype 1) (Mycoplasmoides pneumoniae) protein is Small ribosomal subunit protein uS11.